The sequence spans 525 residues: Vesicular inhibitory amino acid transporter (525 aa).

Residues 1–132 (MATLLRSKLT…WNVTNAIQGM (132 aa)) lie on the Cytoplasmic side of the membrane. The helical transmembrane segment at 133–153 (FVLGLPYAILHGGYLGLFLII) threads the bilayer. Over 154-204 (FAAVVCCYTGKILIACLYEENEDGEVVRVRDSYVAIANACCAPRFPTLGGR) the chain is Lumenal, vesicle. Residue Y186 is modified to 3'-nitrotyrosine. The helical transmembrane segment at 205-225 (VVNVAQIIELVMTCILYVVVS) threads the bilayer. The Cytoplasmic segment spans residues 226–265 (GNLMYNSFPGLPVSQKSWSIIATAVLLPCAFLKNLKAVSK). The chain crosses the membrane as a helical span at residues 266-286 (FSLLCTLAHFVINILVIAYCL). Topologically, residues 287-305 (SRARDWAWEKVKFYIDVKK) are lumenal, vesicle. The chain crosses the membrane as a helical span at residues 306 to 326 (FPISIGIIVFSYTSQIFLPSL). Topologically, residues 327 to 341 (EGNMQQPSEFHCMMN) are cytoplasmic. Residues 342 to 362 (WTHIAACVLKGLFALVAYLTW) traverse the membrane as a helical segment. At 363-383 (ADETKEVITDNLPGSIRAVVN) the chain is on the lumenal, vesicle side. Residues 384 to 404 (IFLVAKALLSYPLPFFAAVEV) form a helical membrane-spanning segment. Topologically, residues 405-438 (LEKSLFQEGSRAFFPACYGGDGRLKSWGLTLRCA) are cytoplasmic. A helical transmembrane segment spans residues 439–459 (LVVFTLLMAIYVPHFALLMGL). Topologically, residues 460–461 (TG) are lumenal, vesicle. A helical membrane pass occupies residues 462–482 (SLTGAGLCFLLPSLFHLRLLW). Residues 483–489 (RKLLWHQ) lie on the Cytoplasmic side of the membrane. A helical membrane pass occupies residues 490–510 (VFFDVAIFVIGGICSVSGFVH). The Lumenal, vesicle segment spans residues 511 to 525 (SLEGLIEAYRTNAED).

The protein belongs to the amino acid/polyamine transporter 2 family. In terms of tissue distribution, brain. Expressed at high levels within the neocortex, hippocampus, cerebellum, striatum, septal nuclei and the reticular nucleus of the thalamus. Also expressed in islets where it is more abundant in the peripheral/mantle region. Highly expressed in the nerve endings of GABA neurons in the brain and spinal cord but also in glycinergic nerve endings. Expressed in glycine-, GABA- or GABA- and glycine-containing boutons.

It is found in the cytoplasmic vesicle. The protein resides in the secretory vesicle. The protein localises to the synaptic vesicle membrane. Its subcellular location is the presynapse. It catalyses the reaction beta-alanine(out) + n H(+)(in) = beta-alanine(in) + n H(+)(out). The enzyme catalyses 4-aminobutanoate(out) + n H(+)(in) = 4-aminobutanoate(in) + n H(+)(out). It carries out the reaction glycine(out) + n H(+)(in) = glycine(in) + n H(+)(out). In terms of biological role, antiporter that exchanges vesicular protons for cytosolic 4-aminobutanoate or to a lesser extend glycine, thus allowing their secretion from nerve terminals. The transport is equally dependent on the chemical and electrical components of the proton gradient. May also transport beta-alanine. Acidification of GABAergic synaptic vesicles is a prerequisite for 4-aminobutanoate uptake. The polypeptide is Vesicular inhibitory amino acid transporter (Rattus norvegicus (Rat)).